The following is a 134-amino-acid chain: UPF0102 protein Dshi_2830 (134 aa).

The protein belongs to the UPF0102 family.

The protein is UPF0102 protein Dshi_2830 of Dinoroseobacter shibae (strain DSM 16493 / NCIMB 14021 / DFL 12).